We begin with the raw amino-acid sequence, 149 residues long: D-aminoacyl-tRNA deacylase (149 aa).

Residues 137-138 carry the Gly-cisPro motif, important for rejection of L-amino acids motif; sequence GP.

This sequence belongs to the DTD family. As to quaternary structure, homodimer.

The protein localises to the cytoplasm. The enzyme catalyses glycyl-tRNA(Ala) + H2O = tRNA(Ala) + glycine + H(+). It catalyses the reaction a D-aminoacyl-tRNA + H2O = a tRNA + a D-alpha-amino acid + H(+). Its function is as follows. An aminoacyl-tRNA editing enzyme that deacylates mischarged D-aminoacyl-tRNAs. Also deacylates mischarged glycyl-tRNA(Ala), protecting cells against glycine mischarging by AlaRS. Acts via tRNA-based rather than protein-based catalysis; rejects L-amino acids rather than detecting D-amino acids in the active site. By recycling D-aminoacyl-tRNA to D-amino acids and free tRNA molecules, this enzyme counteracts the toxicity associated with the formation of D-aminoacyl-tRNA entities in vivo and helps enforce protein L-homochirality. The protein is D-aminoacyl-tRNA deacylase of Syntrophus aciditrophicus (strain SB).